The following is a 187-amino-acid chain: Inosine triphosphate pyrophosphatase (187 aa).

11 to 16 (TSNKNK) contacts ITP. Position 39 (glutamate 39) interacts with Mg(2+). Residues lysine 51, 67–68 (DT), lysine 84, 143–146 (FGWD), lysine 164, and 169–170 (HR) contribute to the ITP site.

It belongs to the HAM1 NTPase family. As to quaternary structure, homodimer. It depends on Mg(2+) as a cofactor. Requires Mn(2+) as cofactor.

The protein localises to the cytoplasm. The protein resides in the nucleus. It carries out the reaction ITP + H2O = IMP + diphosphate + H(+). The catalysed reaction is dITP + H2O = dIMP + diphosphate + H(+). The enzyme catalyses XTP + H2O = XMP + diphosphate + H(+). Pyrophosphatase that hydrolyzes non-canonical purine nucleotides such as inosine triphosphate (ITP), deoxyinosine triphosphate (dITP) or xanthosine 5'-triphosphate (XTP) to their respective monophosphate derivatives. The enzyme does not distinguish between the deoxy- and ribose forms. Probably excludes non-canonical purines from RNA and DNA precursor pools, thus preventing their incorporation into RNA and DNA and avoiding chromosomal lesions. This chain is Inosine triphosphate pyrophosphatase, found in Aspergillus fumigatus (strain ATCC MYA-4609 / CBS 101355 / FGSC A1100 / Af293) (Neosartorya fumigata).